A 1058-amino-acid chain; its full sequence is MEDGTPKHIIQMTGFKMEEKEALVKLLLKLDCTFIKSEKYKNCTHLIAERLCKSEKFLAACAAGKWILTKDYIIHSAKSGRWLDETTYEWGYKIEKDSRYSPQMQSAPKRWREELKRTGAPGAFHRWKVVLLVRTDKRSDSLIRVLEAGKANVILPKSSPSGITHVIASNARIKAEKEKDNFKAPFYPIQYLGDFLLEKEIQNDEDSQTNSVWTEHSNEETNKDFRKDAGFLEMKGALRETMYRTQKEMQNHEDVNVGSILIQHHKKEKFSGSSKDLKFVKMRNTFGSHTYENQKEIKKKDEDIQRSYTLRRKRKKGKESNCKKGVEHEKIKSTLRRHIYNRDQKEMKNSIFAEYAKESKAMAIKTDVDVVEIKNTLRKHIYRAQAVRYNCIRIDKQPVYNVEVKNAEFPRGVLNLIESLIEGHFFKEAIEELSTLQAHYIPPVCVLHALLENVLQDNIDTFSGRYFHILSALLHLHPPWKSPAMSRYYLELFQCPTCMKGAWSLVEVLIRSCLFNESFCHQISENIGSKVLHLTLLKFFFNLIESEVQHLSQKLYDWSDSQNLKITGKAMLLEIFWSGSETSGLLTKPVNMLLEWTIYSHKEKFKSNDVFKHELAYLLAGILGAAIDYWIFLGLKMGRNVMRHMSDDLGSYVSLSCDDFSSQELEIFICSFSSSWLQMFVAEAVFKKLCLQSSGSVSSEPLSLQKMVYSYLPALGKTGVLGSGKIQVSKKIGQRPCFDSQRTLLMLNGTKQKQVEGLPELLDLNLAKCSSSLKKLKKKSEGELSCSKENCPSVVKKMNFHKTNLKGETALHRACINNQVEKLILLLSLPGIDINVKDNAGWTPLHEACNYGNTVCVQEILQRCPEVDLLTQVDGVTPLHDALSNGHVEIGKLLLQHGGPVLLQQRNAKGELPLDYVVSPQIKEELFAITKIEDTVENFHAQAEKHFHYQQLEFGSFLLSRMLLNFCSIFDLSSEFILASKGLTHLNELLMACKSHKETTSVHTDWLLDLYAGNIKTLQKLPHILKELPENLKVCPGVHTEALMITLEMMCRSVMEFS.

BRCT domains follow at residues M12 to A77 and G119 to L196. Residues P410–S1058 form an NSE5-like domain; mediates interaction with SLF2 region. ANK repeat units follow at residues K806–V836, A840–L869, and D874–L903. K931 participates in a covalent cross-link: Glycyl lysine isopeptide (Lys-Gly) (interchain with G-Cter in SUMO2).

Interacts (via N-terminus) with SLF2; this interaction links RAD18 to the SMC5-SMC6 complex. Interacts (via BRCT domains) with RAD18; this interaction occurs in a SLF2-independent manner. Interacts with SMC6. Interacts (via BRCT domains) with RAD18 (via C-terminus and phosphorylated form); this interaction is required for efficient repair of UV-induced DNA damage.

It localises to the nucleus. The protein localises to the cytoplasm. It is found in the cytoskeleton. The protein resides in the microtubule organizing center. Its subcellular location is the centrosome. Its function is as follows. Plays a role in the DNA damage response (DDR) pathway by regulating postreplication repair of UV-damaged DNA and genomic stability maintenance. The SLF1-SLF2 complex acts to link RAD18 with the SMC5-SMC6 complex at replication-coupled interstrand cross-links (ICL) and DNA double-strand breaks (DSBs) sites on chromatin during DNA repair in response to stalled replication forks. Promotes the recruitment of SLF2 and the SMC5-SMC6 complex to DNA lesions. This Homo sapiens (Human) protein is SMC5-SMC6 complex localization factor protein 1.